A 488-amino-acid chain; its full sequence is ATP synthase subunit beta (488 aa).

An ATP-binding site is contributed by 155 to 162 (GGAGVGKT). Positions 467-488 (GFAPDDQNTDADEKPAAQAAAN) are disordered.

Belongs to the ATPase alpha/beta chains family. F-type ATPases have 2 components, CF(1) - the catalytic core - and CF(0) - the membrane proton channel. CF(1) has five subunits: alpha(3), beta(3), gamma(1), delta(1), epsilon(1). CF(0) has three main subunits: a(1), b(2) and c(9-12). The alpha and beta chains form an alternating ring which encloses part of the gamma chain. CF(1) is attached to CF(0) by a central stalk formed by the gamma and epsilon chains, while a peripheral stalk is formed by the delta and b chains.

It localises to the cell membrane. It carries out the reaction ATP + H2O + 4 H(+)(in) = ADP + phosphate + 5 H(+)(out). In terms of biological role, produces ATP from ADP in the presence of a proton gradient across the membrane. The catalytic sites are hosted primarily by the beta subunits. The polypeptide is ATP synthase subunit beta (Lacticaseibacillus casei (strain BL23) (Lactobacillus casei)).